The sequence spans 212 residues: Peroxiredoxin 2 (212 aa).

In terms of domain architecture, Thioredoxin spans 7-162; that stretch reads PLIGEKFPEM…ILRSIRALQL (156 aa). Residue Cys-49 is the Cysteine sulfenic acid (-SOH) intermediate of the active site. Arg-125 is a binding site for substrate.

It belongs to the peroxiredoxin family. Prx6 subfamily. As to quaternary structure, homodecamer. Pentamer of dimers that assemble into a ring structure.

The protein resides in the cytoplasm. It carries out the reaction a hydroperoxide + [thioredoxin]-dithiol = an alcohol + [thioredoxin]-disulfide + H2O. Its function is as follows. Thiol-specific peroxidase that catalyzes the reduction of hydrogen peroxide and organic hydroperoxides to water and alcohols, respectively. Plays a role in cell protection against oxidative stress by detoxifying peroxides. The sequence is that of Peroxiredoxin 2 from Sulfurisphaera tokodaii (strain DSM 16993 / JCM 10545 / NBRC 100140 / 7) (Sulfolobus tokodaii).